Here is a 546-residue protein sequence, read N- to C-terminus: Immunoglobulin-like domain-containing receptor 1 (546 aa).

Positions 1–23 are cleaved as a signal peptide; sequence MAWPKLPAPWLLLCTWLPAGCLS. Residues 24-162 enclose the Ig-like V-type domain; it reads LLVTVQHTER…TSGDPDKEVK (139 aa). Residues 24 to 167 are Extracellular-facing; the sequence is LLVTVQHTER…DKEVKLIVLH (144 aa). Cys-45 and Cys-145 are disulfide-bonded. Residues 168-188 traverse the membrane as a helical segment; sequence WLTVIFIILGALLLLLLIGVC. Residues 189–546 lie on the Cytoplasmic side of the membrane; that stretch reads WCQCCPQYCC…SSHSGRSVVI (358 aa). The disordered stretch occupies residues 399 to 546; that stretch reads WSGRHRSSRL…SSHSGRSVVI (148 aa). Over residues 442 to 457 the composition is skewed to basic and acidic residues; it reads RCQERPRRPSPRESTQ. The segment covering 458–467 has biased composition (basic residues); sequence RHGRRRRHRS. 2 positions are modified to phosphoserine: Ser-499 and Ser-501. The span at 527–539 shows a compositional bias: basic and acidic residues; that stretch reads GSVERRSEKDSSH.

The protein belongs to the immunoglobulin superfamily. LISCH7 family. Homooligomer. Interacts with MARVELD2 and OCLN; the interaction is required to recruit MARVELD2 to tricellular contacts. Interacts (via C-terminus) with TRA2A, TRA2B and SRSF1. Interacts with PLSCR1.

It localises to the cell membrane. The protein resides in the cell junction. The protein localises to the tight junction. Its subcellular location is the nucleus. It is found in the cytoplasm. Functionally, maintains epithelial barrier function by recruiting MARVELD2/tricellulin to tricellular tight junctions (tTJs). Crucial for normal hearing by maintaining the structural and functional integrity of tTJs, which are critical for the survival of auditory neurosensory HCs. Mediates fatty acids and lipoproteins-stimulated CCK/cholecystokinin secretion in the small intestine. In the inner ear, may regulate alternative pre-mRNA splicing via binding to TRA2A, TRA2B and SRSF1. The chain is Immunoglobulin-like domain-containing receptor 1 (ILDR1) from Pongo abelii (Sumatran orangutan).